The sequence spans 248 residues: Probable transcriptional regulatory protein RHECIAT_CH0003714 (248 aa).

This sequence belongs to the TACO1 family.

Its subcellular location is the cytoplasm. The polypeptide is Probable transcriptional regulatory protein RHECIAT_CH0003714 (Rhizobium etli (strain CIAT 652)).